The chain runs to 568 residues: MPASPGHRDVLGCLVAACVPVQPGNPSRRSMLQQSLRAQILVLLGGSLAALLLIALACFGSLTGDVRAYRELLGGPVRAAQLIDEANLQFRGQVQEWKNVLLRGRQTEAQTKYWSQFEAQERAVQDILGRLGSVAEGELKDRVERLREEHRRLGTAYRQGRQRFLEAGADPIAGDQAVTGIDRATTAQMQTLRDELHQASDLHSSSISAEARRTMLLGSLVLIGASLAVALLSLWLVNRNLVRPVQRLIEHIAQLSHGDFGERIEIRRKDELGKLALAANTLRDFLVDIFDRLRRSTRDLDSASGSLNAIASLMAAGTREQFSRTDQVATAMQEMSATAQEVARYAGDAARAADEADDSAQRGEDVMEETIRSIGEMRKEIDHTVEVIRQLESDSGRIGKVLDVIRGIAEQTNLLALNAAIEAARAGDAGRGFAVVADEVRTLAQRTAESIAEIHQIIDTVQNGAVNAARAIESGQSRSEAGAEQVANAGAMLRQITASVESIRDMNRQIATAAEEQTAVAEEISRNLTEIASIASSNQEQVEQTEAASRDLHGLSAQLGDALQRLRA.

Topologically, residues 1–39 (MPASPGHRDVLGCLVAACVPVQPGNPSRRSMLQQSLRAQ) are cytoplasmic. A helical transmembrane segment spans residues 40 to 60 (ILVLLGGSLAALLLIALACFG). Topologically, residues 61-216 (SLTGDVRAYR…ISAEARRTML (156 aa)) are periplasmic. A helical transmembrane segment spans residues 217-237 (LGSLVLIGASLAVALLSLWLV). Residues 238–568 (NRNLVRPVQR…LGDALQRLRA (331 aa)) lie on the Cytoplasmic side of the membrane. The HAMP domain occupies 239–291 (RNLVRPVQRLIEHIAQLSHGDFGERIEIRRKDELGKLALAANTLRDFLVDIFD). In terms of domain architecture, Methyl-accepting transducer spans 296–532 (STRDLDSASG…EISRNLTEIA (237 aa)).

Belongs to the methyl-accepting chemotaxis (MCP) protein family.

It is found in the cell inner membrane. Its function is as follows. Chemotactic-signal transducers respond to changes in the concentration of attractants and repellents in the environment, transduce a signal from the outside to the inside of the cell, and facilitate sensory adaptation through the variation of the level of methylation. Chemoreceptor for inorganic phosphate, which is required for taxis at high concentrations of phosphate. Recognizes inorganic phosphate directly. Can also bind to other components that have a pyrophosphate group, including ATP and ADP. The chain is Methyl-accepting chemotaxis protein CtpH from Pseudomonas aeruginosa (strain ATCC 15692 / DSM 22644 / CIP 104116 / JCM 14847 / LMG 12228 / 1C / PRS 101 / PAO1).